A 1929-amino-acid polypeptide reads, in one-letter code: Intraflagellar transport protein 140 (1929 aa).

WD repeat units follow at residues 76–116 (QVQV…PSYK) and 119–158 (LHQEELCLIKWLSHGRILVTCDVSGQVILYKFSTDTYSFE). The interval 774-795 (LSTPDTGSPAVEAEESPQRQTR) is disordered. 3 LRR repeats span residues 957–980 (STSLNLLFVGSSMLFALKTGTFTK), 1019–1044 (ISLLQSIYISSEQRAKVPLLVQSLAE), and 1510–1532 (AQSLELCIKSNRMKELSNLLADI).

The protein localises to the cell projection. Its subcellular location is the cilium. It is found in the flagellum. The protein resides in the cytoplasm. It localises to the cytoskeleton. The protein localises to the flagellum axoneme. Its subcellular location is the flagellum basal body. Component of the intraflagellar transport complex A (IFT-A) involved in flagellar assembly. In Giardia intestinalis (strain ATCC 50803 / WB clone C6) (Giardia lamblia), this protein is Intraflagellar transport protein 140.